The following is a 337-amino-acid chain: Protoheme IX farnesyltransferase (337 aa).

The segment covering 1 to 17 (MPFSISKDTVSNQTTHV) has biased composition (polar residues). A disordered region spans residues 1–41 (MPFSISKDTVSNQTTHVATAPASQRPDPVETKVEQEQGRPR). The span at 27–41 (DPVETKVEQEQGRPR) shows a compositional bias: basic and acidic residues. 8 helical membrane passes run 59–79 (IIELLLVTTLPVMFLASHGVP), 81–101 (LGLVIATMVGGLFAAASANVF), 130–150 (SALIYGIILWIIATIILGFGA), 153–173 (LSAALALIANLFYVFVYSMLL), 196–216 (WTAVTGSVGWEPLVLFFIVFW), 250–270 (VAIQILIYTVMTVAISLVLWP), 271–291 (VAHMGWIYVVVAVVSGAVFIV), and 311–331 (PMGLFHWSNTYLSLLFLAIAV).

It belongs to the UbiA prenyltransferase family. Protoheme IX farnesyltransferase subfamily.

Its subcellular location is the cell membrane. It catalyses the reaction heme b + (2E,6E)-farnesyl diphosphate + H2O = Fe(II)-heme o + diphosphate. It participates in porphyrin-containing compound metabolism; heme O biosynthesis; heme O from protoheme: step 1/1. Its function is as follows. Converts heme B (protoheme IX) to heme O by substitution of the vinyl group on carbon 2 of heme B porphyrin ring with a hydroxyethyl farnesyl side group. In Cutibacterium acnes (strain DSM 16379 / KPA171202) (Propionibacterium acnes), this protein is Protoheme IX farnesyltransferase.